The following is a 224-amino-acid chain: Inhibitor of apoptosis protein (224 aa).

One copy of the BIR repeat lies at 29–92; that stretch reads IDARNQSFAI…GFWSRNCGFM (64 aa). The Zn(2+) site is built by Cys-62, Cys-65, His-82, and Cys-89.

It belongs to the asfivirus IAP family. In terms of assembly, interacts with subunit p17 of host CASP3.

The protein localises to the host cytoplasm. It is found in the virion. In terms of biological role, prevent apoptosis of host cell by inhibiting caspase-3/CASP3 activation to promote the viral replication. Also induces the activation of host NF-kappaB. The protein is Inhibitor of apoptosis protein (p27) of African swine fever virus (isolate Pig/Haiti/H811/1981) (ASFV).